Here is a 250-residue protein sequence, read N- to C-terminus: MIEKDFVTEGLKRTRIDEYLEKELERAGYGGMDVQITPLGTMVVVYAERPGMVIGRGGKNVRAITNTLKNDFGLDNPQIEVKEVSVPELNPKIMAYKIANMLQRGMHFRRVAYSTIRRIMGAGAQGVEVTISGKIRGSRSAVAKFVEGYIKKCGEPSIRLVEEGFATVQLKPGVLGIYVRIMPPETVLPDSVEILPPKMEIIEDDEVVEVEELDDSEEIVEEEIVEEVEDLDELEEIVEEESAEEAKEDS.

Residues 16–85 (IDEYLEKELE…NPQIEVKEVS (70 aa)) enclose the KH type-2 domain.

Belongs to the universal ribosomal protein uS3 family. In terms of assembly, part of the 30S ribosomal subunit.

Functionally, binds the lower part of the 30S subunit head. The chain is Small ribosomal subunit protein uS3 from Methanobrevibacter smithii (strain ATCC 35061 / DSM 861 / OCM 144 / PS).